The chain runs to 82 residues: Host transcription reprogramming factor 10 (82 aa).

A signal peptide spans 1-19; the sequence is MQIFNMVSLVALFALGATA. A C2H2-type zinc finger spans residues 57 to 81; it reads WVCHACNKQFTTPAALQKHKDTVVH.

It localises to the secreted. The protein localises to the host nucleus. Probable secreted effector that translocates into the nuclei of host cells to reprogram the expression of targeted genes by binding on effector binding elements in rice. This chain is Host transcription reprogramming factor 10, found in Pyricularia oryzae (strain 70-15 / ATCC MYA-4617 / FGSC 8958) (Rice blast fungus).